We begin with the raw amino-acid sequence, 697 residues long: Elongation factor G 2 (697 aa).

Residues 5–280 (SKYRNIGIFA…AVVDYLPAPN (276 aa)) form the tr-type G domain. GTP-binding positions include 14-21 (AHVDAGKT), 78-82 (DTPGH), and 132-135 (NKLD).

The protein belongs to the TRAFAC class translation factor GTPase superfamily. Classic translation factor GTPase family. EF-G/EF-2 subfamily.

It is found in the cytoplasm. Catalyzes the GTP-dependent ribosomal translocation step during translation elongation. During this step, the ribosome changes from the pre-translocational (PRE) to the post-translocational (POST) state as the newly formed A-site-bound peptidyl-tRNA and P-site-bound deacylated tRNA move to the P and E sites, respectively. Catalyzes the coordinated movement of the two tRNA molecules, the mRNA and conformational changes in the ribosome. The polypeptide is Elongation factor G 2 (Shewanella sp. (strain MR-4)).